Here is a 271-residue protein sequence, read N- to C-terminus: Formamidopyrimidine-DNA glycosylase (271 aa).

Pro-2 functions as the Schiff-base intermediate with DNA in the catalytic mechanism. Glu-3 acts as the Proton donor in catalysis. The Proton donor; for beta-elimination activity role is filled by Lys-58. The DNA site is built by His-91, Arg-110, and Arg-152. Residues 237–271 (WVYGRTGQPCRKCGALVSKTRQGQRSSFFCAQCQK) form an FPG-type zinc finger. The Proton donor; for delta-elimination activity role is filled by Arg-261.

This sequence belongs to the FPG family. In terms of assembly, monomer. Zn(2+) is required as a cofactor.

The enzyme catalyses Hydrolysis of DNA containing ring-opened 7-methylguanine residues, releasing 2,6-diamino-4-hydroxy-5-(N-methyl)formamidopyrimidine.. It catalyses the reaction 2'-deoxyribonucleotide-(2'-deoxyribose 5'-phosphate)-2'-deoxyribonucleotide-DNA = a 3'-end 2'-deoxyribonucleotide-(2,3-dehydro-2,3-deoxyribose 5'-phosphate)-DNA + a 5'-end 5'-phospho-2'-deoxyribonucleoside-DNA + H(+). Its function is as follows. Involved in base excision repair of DNA damaged by oxidation or by mutagenic agents. Acts as a DNA glycosylase that recognizes and removes damaged bases. Has a preference for oxidized purines, such as 7,8-dihydro-8-oxoguanine (8-oxoG). Has AP (apurinic/apyrimidinic) lyase activity and introduces nicks in the DNA strand. Cleaves the DNA backbone by beta-delta elimination to generate a single-strand break at the site of the removed base with both 3'- and 5'-phosphates. The sequence is that of Formamidopyrimidine-DNA glycosylase from Nitrosomonas eutropha (strain DSM 101675 / C91 / Nm57).